Reading from the N-terminus, the 367-residue chain is Probable outer membrane usher protein LpfC (367 aa).

Residues 1-30 form the signal peptide; that stretch reads MSRKTVSRTFSSFSISVVAVAVASTFSAHA.

The protein belongs to the fimbrial export usher family.

The protein localises to the cell outer membrane. In terms of biological role, part of the lpfABCC'DE fimbrial operon. LP fimbriae may participate in the interaction with eukaryotic cells by assisting in microcolony formation. Could be involved in the export and assembly of the fimbrial subunits across the outer membrane. The polypeptide is Probable outer membrane usher protein LpfC (lpfC) (Escherichia coli O157:H7).